We begin with the raw amino-acid sequence, 288 residues long: 4-hydroxy-tetrahydrodipicolinate synthase (288 aa).

A pyruvate-binding site is contributed by T43. Y131 functions as the Proton donor/acceptor in the catalytic mechanism. K160 serves as the catalytic Schiff-base intermediate with substrate. I200 provides a ligand contact to pyruvate.

Belongs to the DapA family. As to quaternary structure, homotetramer; dimer of dimers.

The protein localises to the cytoplasm. The enzyme catalyses L-aspartate 4-semialdehyde + pyruvate = (2S,4S)-4-hydroxy-2,3,4,5-tetrahydrodipicolinate + H2O + H(+). It functions in the pathway amino-acid biosynthesis; L-lysine biosynthesis via DAP pathway; (S)-tetrahydrodipicolinate from L-aspartate: step 3/4. Catalyzes the condensation of (S)-aspartate-beta-semialdehyde [(S)-ASA] and pyruvate to 4-hydroxy-tetrahydrodipicolinate (HTPA). The sequence is that of 4-hydroxy-tetrahydrodipicolinate synthase from Methanococcus aeolicus (strain ATCC BAA-1280 / DSM 17508 / OCM 812 / Nankai-3).